Consider the following 158-residue polypeptide: Large ribosomal subunit protein bL21 (158 aa).

The tract at residues 127 to 158 (TQETKSAASVKKAAKKSAPQKQAAVASNSKED) is disordered. Low complexity predominate over residues 131–158 (KSAASVKKAAKKSAPQKQAAVASNSKED).

It belongs to the bacterial ribosomal protein bL21 family. In terms of assembly, part of the 50S ribosomal subunit. Contacts protein L20.

This protein binds to 23S rRNA in the presence of protein L20. This is Large ribosomal subunit protein bL21 from Bartonella henselae (strain ATCC 49882 / DSM 28221 / CCUG 30454 / Houston 1) (Rochalimaea henselae).